The chain runs to 509 residues: uncharacterized protein (509 aa).

Residues 1–32 (MMLPKRNIIHFLRKRAIFIVAAFIALLTVDYS) form the signal peptide.

It localises to the endoplasmic reticulum. This is an uncharacterized protein from Schizosaccharomyces pombe (strain 972 / ATCC 24843) (Fission yeast).